The sequence spans 486 residues: ATP-dependent 6-phosphofructokinase (486 aa).

ATP is bound by residues G105, 171 to 172 (RG), and 196 to 199 (GDGT). Residue D197 coordinates Mg(2+). Residues 225 to 227 (TID), 270 to 272 (MGR), E323, and 378 to 381 (YMIR) contribute to the substrate site. D227 serves as the catalytic Proton acceptor. The Peroxisomal targeting signal signature appears at 484–486 (SKV).

This sequence belongs to the phosphofructokinase type A (PFKA) family. PPi-dependent PFK group II subfamily. Atypical ATP-dependent clade 'X' sub-subfamily. Homotetramer. Requires Mg(2+) as cofactor.

It localises to the glycosome. It carries out the reaction beta-D-fructose 6-phosphate + ATP = beta-D-fructose 1,6-bisphosphate + ADP + H(+). It participates in carbohydrate degradation; glycolysis; D-glyceraldehyde 3-phosphate and glycerone phosphate from D-glucose: step 3/4. With respect to regulation, allosterically activated by AMP. In terms of biological role, catalyzes the phosphorylation of D-fructose 6-phosphate to fructose 1,6-bisphosphate by ATP, the first committing step of glycolysis. The polypeptide is ATP-dependent 6-phosphofructokinase (Leishmania donovani).